The primary structure comprises 101 residues: Large ribosomal subunit protein uL24 (101 aa).

It belongs to the universal ribosomal protein uL24 family. Part of the 50S ribosomal subunit.

Functionally, one of two assembly initiator proteins, it binds directly to the 5'-end of the 23S rRNA, where it nucleates assembly of the 50S subunit. One of the proteins that surrounds the polypeptide exit tunnel on the outside of the subunit. The polypeptide is Large ribosomal subunit protein uL24 (Borrelia hermsii (strain HS1 / DAH)).